A 275-amino-acid polypeptide reads, in one-letter code: Ditrans,polycis-undecaprenyl-diphosphate synthase ((2E,6E)-farnesyl-diphosphate specific) (275 aa).

Residue D45 is part of the active site. Residue D45 coordinates Mg(2+). Substrate-binding positions include G46 to R49, W50, R58, H62, and S90 to E92. The active-site Proton acceptor is N93. Substrate contacts are provided by residues W94, R96, R213, and R219–S221. Mg(2+) is bound at residue E232.

Belongs to the UPP synthase family. As to quaternary structure, homodimer. The cofactor is Mg(2+).

The catalysed reaction is 8 isopentenyl diphosphate + (2E,6E)-farnesyl diphosphate = di-trans,octa-cis-undecaprenyl diphosphate + 8 diphosphate. In terms of biological role, catalyzes the sequential condensation of isopentenyl diphosphate (IPP) with (2E,6E)-farnesyl diphosphate (E,E-FPP) to yield (2Z,6Z,10Z,14Z,18Z,22Z,26Z,30Z,34E,38E)-undecaprenyl diphosphate (di-trans,octa-cis-UPP). UPP is the precursor of glycosyl carrier lipid in the biosynthesis of bacterial cell wall polysaccharide components such as peptidoglycan and lipopolysaccharide. The polypeptide is Ditrans,polycis-undecaprenyl-diphosphate synthase ((2E,6E)-farnesyl-diphosphate specific) (Shewanella oneidensis (strain ATCC 700550 / JCM 31522 / CIP 106686 / LMG 19005 / NCIMB 14063 / MR-1)).